A 309-amino-acid polypeptide reads, in one-letter code: Aspartate carbamoyltransferase catalytic subunit (309 aa).

Carbamoyl phosphate-binding residues include Arg55 and Thr56. Lys85 provides a ligand contact to L-aspartate. Arg106, His135, and Gln138 together coordinate carbamoyl phosphate. Positions 168 and 230 each coordinate L-aspartate. Positions 268 and 269 each coordinate carbamoyl phosphate.

This sequence belongs to the aspartate/ornithine carbamoyltransferase superfamily. ATCase family. As to quaternary structure, heterododecamer (2C3:3R2) of six catalytic PyrB chains organized as two trimers (C3), and six regulatory PyrI chains organized as three dimers (R2).

The enzyme catalyses carbamoyl phosphate + L-aspartate = N-carbamoyl-L-aspartate + phosphate + H(+). The protein operates within pyrimidine metabolism; UMP biosynthesis via de novo pathway; (S)-dihydroorotate from bicarbonate: step 2/3. Catalyzes the condensation of carbamoyl phosphate and aspartate to form carbamoyl aspartate and inorganic phosphate, the committed step in the de novo pyrimidine nucleotide biosynthesis pathway. This chain is Aspartate carbamoyltransferase catalytic subunit, found in Aliivibrio salmonicida (strain LFI1238) (Vibrio salmonicida (strain LFI1238)).